We begin with the raw amino-acid sequence, 330 residues long: Putative UV-damage endonuclease (330 aa).

The protein belongs to the uve1/UvsE family.

It is found in the virion. In terms of biological role, endonuclease for the repair of UV-irradiated DNA. This chain is Putative UV-damage endonuclease, found in Acanthamoeba polyphaga mimivirus (APMV).